The sequence spans 263 residues: 4-hydroxy-tetrahydrodipicolinate reductase (263 aa).

NAD(+) is bound by residues 7-12, 96-98, and 122-125; these read GFKGRM, GTT, and APNF. Residue His-152 is the Proton donor/acceptor of the active site. His-153 contacts (S)-2,3,4,5-tetrahydrodipicolinate. Lys-156 acts as the Proton donor in catalysis. 162-163 contributes to the (S)-2,3,4,5-tetrahydrodipicolinate binding site; that stretch reads GT.

It belongs to the DapB family.

It is found in the cytoplasm. It catalyses the reaction (S)-2,3,4,5-tetrahydrodipicolinate + NAD(+) + H2O = (2S,4S)-4-hydroxy-2,3,4,5-tetrahydrodipicolinate + NADH + H(+). The catalysed reaction is (S)-2,3,4,5-tetrahydrodipicolinate + NADP(+) + H2O = (2S,4S)-4-hydroxy-2,3,4,5-tetrahydrodipicolinate + NADPH + H(+). Its pathway is amino-acid biosynthesis; L-lysine biosynthesis via DAP pathway; (S)-tetrahydrodipicolinate from L-aspartate: step 4/4. Its function is as follows. Catalyzes the conversion of 4-hydroxy-tetrahydrodipicolinate (HTPA) to tetrahydrodipicolinate. The protein is 4-hydroxy-tetrahydrodipicolinate reductase of Listeria innocua serovar 6a (strain ATCC BAA-680 / CLIP 11262).